The sequence spans 287 residues: Bifunctional protein FolD (287 aa).

Residues 168–170 (GRS), Ser193, and Ile234 each bind NADP(+).

This sequence belongs to the tetrahydrofolate dehydrogenase/cyclohydrolase family. As to quaternary structure, homodimer.

The enzyme catalyses (6R)-5,10-methylene-5,6,7,8-tetrahydrofolate + NADP(+) = (6R)-5,10-methenyltetrahydrofolate + NADPH. It carries out the reaction (6R)-5,10-methenyltetrahydrofolate + H2O = (6R)-10-formyltetrahydrofolate + H(+). The protein operates within one-carbon metabolism; tetrahydrofolate interconversion. Functionally, catalyzes the oxidation of 5,10-methylenetetrahydrofolate to 5,10-methenyltetrahydrofolate and then the hydrolysis of 5,10-methenyltetrahydrofolate to 10-formyltetrahydrofolate. The protein is Bifunctional protein FolD of Clostridioides difficile (strain 630) (Peptoclostridium difficile).